Here is a 407-residue protein sequence, read N- to C-terminus: UDP-N-acetylglucosamine--N-acetylmuramyl-(pentapeptide) pyrophosphoryl-undecaprenol N-acetylglucosamine transferase (407 aa).

Residues 1–21 (MNNSVREPTRGRRGSPPVADA) form a disordered region. UDP-N-acetyl-alpha-D-glucosamine-binding positions include 38 to 40 (TAG), Asn-157, Ser-228, and Gln-324.

The protein belongs to the glycosyltransferase 28 family. MurG subfamily.

Its subcellular location is the cell membrane. It carries out the reaction di-trans,octa-cis-undecaprenyl diphospho-N-acetyl-alpha-D-muramoyl-L-alanyl-D-glutamyl-meso-2,6-diaminopimeloyl-D-alanyl-D-alanine + UDP-N-acetyl-alpha-D-glucosamine = di-trans,octa-cis-undecaprenyl diphospho-[N-acetyl-alpha-D-glucosaminyl-(1-&gt;4)]-N-acetyl-alpha-D-muramoyl-L-alanyl-D-glutamyl-meso-2,6-diaminopimeloyl-D-alanyl-D-alanine + UDP + H(+). It participates in cell wall biogenesis; peptidoglycan biosynthesis. Cell wall formation. Catalyzes the transfer of a GlcNAc subunit on undecaprenyl-pyrophosphoryl-MurNAc-pentapeptide (lipid intermediate I) to form undecaprenyl-pyrophosphoryl-MurNAc-(pentapeptide)GlcNAc (lipid intermediate II). The sequence is that of UDP-N-acetylglucosamine--N-acetylmuramyl-(pentapeptide) pyrophosphoryl-undecaprenol N-acetylglucosamine transferase from Mycobacterium leprae (strain TN).